The sequence spans 930 residues: Probable SapB synthase (930 aa).

The Protein kinase domain occupies 256–516; sequence YTVESALHFS…GSTRADETTR (261 aa). Residues 262 to 270 and Lys-285 each bind ATP; that span reads LHFSNGGGV. Asp-395 acts as the Proton acceptor in catalysis. The chain crosses the membrane as a helical span at residues 447–467; sequence YALACLRIVLFLPLTSLLAVD. Over residues 501–527 the composition is skewed to basic and acidic residues; the sequence is GSTRVDGSTRADETTRADETTRLDVTT. Disordered stretches follow at residues 501-558 and 911-930; these read GSTR…RDSM and PFLPPPRRSGGPLTRPHQEP. The segment covering 532-546 has biased composition (low complexity); sequence APDAARRPAGPVAPV. A compositionally biased stretch (basic and acidic residues) spans 547–556; that stretch reads RPDDWPRSRD.

It in the N-terminal section; belongs to the protein kinase superfamily.

It localises to the cell membrane. Required for aerial hyphae formation. Probably involved in processing the precursor of SapB to its mature form. In Streptomyces coelicolor (strain ATCC BAA-471 / A3(2) / M145), this protein is Probable SapB synthase.